The chain runs to 365 residues: 1-acyl-sn-glycerol-3-phosphate acyltransferase epsilon (365 aa).

Residues 15 to 35 traverse the membrane as a helical segment; that stretch reads LLPSVLLLGSAPTYLLAWTLW. The HXXXXD motif signature appears at 93–98; sequence HQSTVD. The chain crosses the membrane as a helical span at residues 345–365; the sequence is LYMGTWLYGTLLGCLWFVIKA.

This sequence belongs to the 1-acyl-sn-glycerol-3-phosphate acyltransferase family. As to expression, widely expressed.

The protein resides in the endoplasmic reticulum membrane. Its subcellular location is the nucleus envelope. It is found in the mitochondrion. The enzyme catalyses a 1-acyl-sn-glycero-3-phosphate + an acyl-CoA = a 1,2-diacyl-sn-glycero-3-phosphate + CoA. The catalysed reaction is 1-(9Z-octadecenoyl)-sn-glycero-3-phosphate + tetradecanoyl-CoA = 1-(9Z)-octadecenoyl-2-tetradecanoyl-sn-glycero-3-phosphate + CoA. It carries out the reaction pentadecanoyl-CoA + 1-(9Z-octadecenoyl)-sn-glycero-3-phosphate = 1-(9Z)-octadecenoyl-2-pentadecanoyl-sn-glycero-3-phosphate + CoA. It catalyses the reaction 1-(9Z-octadecenoyl)-sn-glycero-3-phosphate + octadecanoyl-CoA = 1-(9Z-octadecenoyl)-2-octadecanoyl-sn-glycero-3-phosphate + CoA. The enzyme catalyses nonadecanoyl-CoA + 1-(9Z-octadecenoyl)-sn-glycero-3-phosphate = 1-(9Z)-octadecenoyl-2-nonadecanoyl-sn-glycero-3-phosphate + CoA. The catalysed reaction is 1-(9Z-octadecenoyl)-sn-glycero-3-phosphoethanolamine + (9Z)-octadecenoyl-CoA = 1,2-di-(9Z-octadecenoyl)-sn-glycero-3-phosphoethanolamine + CoA. It carries out the reaction 1-(9Z-octadecenoyl)-sn-glycero-3-phosphocholine + (9Z)-octadecenoyl-CoA = 1,2-di-(9Z-octadecenoyl)-sn-glycero-3-phosphocholine + CoA. It catalyses the reaction 1-(9Z-octadecenoyl)-sn-glycero-3-phospho-(1D-myo-inositol) + (5Z,8Z,11Z,14Z)-eicosatetraenoyl-CoA = 1-(9Z-octadecenoyl)-2-(5Z,8Z,11Z,14Z-eicosatetraenoyl)-sn-glycero-3-phospho-1D-myo-inositol + CoA. The enzyme catalyses 1-(9Z-octadecenoyl)-sn-glycero-3-phospho-L-serine + (9Z)-octadecenoyl-CoA = 1,2-di-(9Z)-octadecenoyl-sn-glycero-3-phospho-L-serine + CoA. The catalysed reaction is 1-(9Z-octadecenoyl)-sn-glycero-3-phospho-L-serine + (5Z,8Z,11Z,14Z)-eicosatetraenoyl-CoA = 1-(9Z-octadecenoyl)-2-(5Z,8Z,11Z,14Z-eicosatetraenoyl)-sn-glycero-3-phospho-L-serine + CoA. It carries out the reaction 1-hexadecanoyl-sn-glycero-3-phosphate + (9Z)-octadecenoyl-CoA = 1-hexadecanoyl-2-(9Z-octadecenoyl)-sn-glycero-3-phosphate + CoA. It catalyses the reaction 1-heptadecanoyl-sn-glycero-3-phosphate + (9Z)-octadecenoyl-CoA = 1-heptadecanoyl-2-(9Z)-octadecenoyl-sn-glycero-3-phosphate + CoA. The enzyme catalyses 1-(5Z,8Z,11Z,14Z-eicosatetraenoyl)-sn-glycero-3-phosphate + (9Z)-octadecenoyl-CoA = 1-(5Z,8Z,11Z,14Z)-eicosatetraenoyl-2-(9Z)-octadecenoyl-sn-glycero-3-phosphate + CoA. The catalysed reaction is 1-octadecanoyl-sn-glycero-3-phosphate + (9Z)-octadecenoyl-CoA = 1-octadecanoyl-2-(9Z-octadecenoyl)-sn-glycero-3-phosphate + CoA. It carries out the reaction 1-(9Z-octadecenoyl)-sn-glycero-3-phosphate + (5Z,8Z,11Z,14Z)-eicosatetraenoyl-CoA = 1-(9Z)-octadecenoyl-2-(5Z,8Z,11Z,14Z)-eicosatetraenoyl-sn-glycero-3-phosphate + CoA. It catalyses the reaction heptadecanoyl-CoA + 1-(9Z-octadecenoyl)-sn-glycero-3-phosphate = 1-(9Z)-octadecenoyl-2-heptadecanoyl-sn-glycero-3-phosphate + CoA. The enzyme catalyses 1-(9Z-octadecenoyl)-sn-glycero-3-phosphocholine + (5Z,8Z,11Z,14Z)-eicosatetraenoyl-CoA = 1-(9Z)-octadecenoyl-2-(5Z,8Z,11Z,14Z)-icosatetraenoyl-sn-glycero-3-phosphocholine + CoA. The catalysed reaction is 1-(9Z-octadecenoyl)-sn-glycero-3-phosphate + (9Z)-octadecenoyl-CoA = 1,2-di-(9Z-octadecenoyl)-sn-glycero-3-phosphate + CoA. It carries out the reaction 1-(9Z-octadecenoyl)-sn-glycero-3-phosphate + hexadecanoyl-CoA = 1-hexadecanoyl-2-(9Z-octadecenoyl)-sn-glycero-3-phosphate + CoA. It functions in the pathway phospholipid metabolism; CDP-diacylglycerol biosynthesis; CDP-diacylglycerol from sn-glycerol 3-phosphate: step 2/3. Converts 1-acyl-sn-glycerol-3-phosphate (lysophosphatidic acid or LPA) into 1,2-diacyl-sn-glycerol-3-phosphate (phosphatidic acid or PA) by incorporating an acyl moiety at the sn-2 position of the glycerol backbone. Acts on LPA containing saturated or unsaturated fatty acids C15:0-C20:4 at the sn-1 position using C18:1-CoA as the acyl donor. Also acts on lysophosphatidylethanolamine using oleoyl-CoA, but not arachidonoyl-CoA, and lysophosphatidylinositol using arachidonoyl-CoA, but not oleoyl-CoA. Activity toward lysophosphatidylglycerol not detectable. The chain is 1-acyl-sn-glycerol-3-phosphate acyltransferase epsilon (Agpat5) from Mus musculus (Mouse).